A 289-amino-acid chain; its full sequence is Protease HtpX homolog (289 aa).

2 helical membrane-spanning segments follow: residues 7–26 (TAAL…YWVI) and 31–48 (GLII…FSWY). A Zn(2+)-binding site is contributed by His-132. Glu-133 is a catalytic residue. His-136 is a Zn(2+) binding site. The next 2 membrane-spanning stretches (helical) occupy residues 151–171 (VAGA…FGGG) and 182–202 (LGVL…QLAI). Glu-207 serves as a coordination point for Zn(2+).

It belongs to the peptidase M48B family. Zn(2+) serves as cofactor.

Its subcellular location is the cell inner membrane. The sequence is that of Protease HtpX homolog from Nostoc punctiforme (strain ATCC 29133 / PCC 73102).